A 152-amino-acid polypeptide reads, in one-letter code: Small ribosomal subunit protein uS11 (152 aa).

A disordered region spans residues 133 to 152 (VTPIPTDSTRRKSGHRGRRL). Residues 143–152 (RKSGHRGRRL) show a composition bias toward basic residues.

It belongs to the universal ribosomal protein uS11 family. As to quaternary structure, component of the small ribosomal subunit. Part of the small subunit (SSU) processome, composed of more than 70 proteins and the RNA chaperone small nucleolar RNA (snoRNA) U3.

The protein localises to the cytoplasm. It localises to the nucleus. Its subcellular location is the nucleolus. Component of the small ribosomal subunit. The ribosome is a large ribonucleoprotein complex responsible for the synthesis of proteins in the cell. Part of the small subunit (SSU) processome, first precursor of the small eukaryotic ribosomal subunit. During the assembly of the SSU processome in the nucleolus, many ribosome biogenesis factors, an RNA chaperone and ribosomal proteins associate with the nascent pre-rRNA and work in concert to generate RNA folding, modifications, rearrangements and cleavage as well as targeted degradation of pre-ribosomal RNA by the RNA exosome. The sequence is that of Small ribosomal subunit protein uS11 (rps14) from Dictyostelium discoideum (Social amoeba).